Here is an 830-residue protein sequence, read N- to C-terminus: MPGHSRSRDRLSPSSELDDADPVYSPSVYQREHYYNNDSLFDSADDDYTRTPRNVYSYETHDEYHDDDDDDDDVHEHDHDHEYDDKFEEPWVPLRAQVEGDQWREGFETAIPKEEDVTQAKEYQYQMSGALGDDGPPPLPSDALGRGKGKKRLDRETRRQRRKERLAAFFKHKNGSASAGLVSGDALAKLLGSQDGDEDCLSHLGTERADSMSQKNLEGGRQRKLPVLSEEPMMLRPFPAVAPTGQTQGRVVSGAQLEEGGPGMEMRHRGGGGPPAEGLLQKEGDWDGSTKGSSTSARPSFWKRYHKTFIFFAILIVLAAIAIPVGIIEARRLHGTSGGDNSSNSNLKGISRDSIPAYARGTYLDPFTWYDTTDFNVTFTNATVGGLSIMGLNSTWNDSAQANENVPPLNEKFPYGSQPIRGVNLGGWLSIEPFIVPSLFDTYTSSEGIIDEWTLSEKLGDSAASVIEKHYATFITEQDFADIRDAGLDHVRIQFSYWAIKTYDGDPYVPKIAWRYLLRAIEYCRKYGLRVNLDPHGIPGSQNGWNHSGRQGTIGWLNGTDGELNRQRSLEMHDQLSQFFAQDRYKNVVTIYGLVNEPLMLSLPVEKVLNWTTEATNLVQKNGIKAWVTVHDGFLNLDKWDKMLKTRPSNMMLDTHQYTVFNTGEIVLNHTRRVELICESWYSMIQQINITSTGWGPTICGEWSQADTDCAQYVNNVGRGTRWEGTFSLTDSTQYCPTASEGTCSCTQANAVPGVYSEGYKTFLQTYAEAQMSAFESAMGWFYWTWATESAAQWSYRTAWKNGYMPKKAYSPSFKCGDTIPSFGNLPEYY.

2 stretches are compositionally biased toward basic and acidic residues: residues 1 to 11 (MPGHSRSRDRL) and 74 to 84 (VHEHDHDHEYD). 3 disordered regions span residues 1–91 (MPGH…EEPW), 127–163 (MSGA…QRRK), and 260–297 (GGPG…STSA). Over 1 to 307 (MPGHSRSRDR…RPSFWKRYHK (307 aa)) the chain is Cytoplasmic. The segment covering 147-163 (GKGKKRLDRETRRQRRK) has biased composition (basic residues). Residues 308–328 (TFIFFAILIVLAAIAIPVGII) traverse the membrane as a helical; Signal-anchor for type II membrane protein segment. Residues 329-830 (EARRLHGTSG…PSFGNLPEYY (502 aa)) are Extracellular-facing. N-linked (GlcNAc...) asparagine glycosylation is found at Asn-341, Asn-376, Asn-381, Asn-393, Asn-397, Asn-546, and Asn-558. Glu-597 serves as the catalytic Proton donor. N-linked (GlcNAc...) asparagine glycosylation is found at Asn-610, Asn-669, and Asn-689. The Nucleophile role is filled by Glu-702.

It belongs to the glycosyl hydrolase 5 (cellulase A) family.

It localises to the cell membrane. It catalyses the reaction Successive hydrolysis of beta-D-glucose units from the non-reducing ends of (1-&gt;3)-beta-D-glucans, releasing alpha-glucose.. In terms of biological role, glucosidase involved in the degradation of cellulosic biomass. Active on lichenan. In Aspergillus niger (strain ATCC MYA-4892 / CBS 513.88 / FGSC A1513), this protein is Probable glucan 1,3-beta-glucosidase D (exgD).